We begin with the raw amino-acid sequence, 216 residues long: GTP cyclohydrolase 1 (216 aa).

Zn(2+) contacts are provided by Cys-108, His-111, and Cys-179.

The protein belongs to the GTP cyclohydrolase I family. As to quaternary structure, toroid-shaped homodecamer, composed of two pentamers of five dimers.

The enzyme catalyses GTP + H2O = 7,8-dihydroneopterin 3'-triphosphate + formate + H(+). It functions in the pathway cofactor biosynthesis; 7,8-dihydroneopterin triphosphate biosynthesis; 7,8-dihydroneopterin triphosphate from GTP: step 1/1. This Shewanella sp. (strain MR-7) protein is GTP cyclohydrolase 1.